Reading from the N-terminus, the 207-residue chain is Recombination protein RecR (207 aa).

The C4-type zinc-finger motif lies at 60–75; sequence CRRCHNISDSGVCTIC. The 96-residue stretch at 83 to 178 folds into the Toprim domain; that stretch reads STLCVVENIR…RVSVIARGIA (96 aa).

Belongs to the RecR family.

In terms of biological role, may play a role in DNA repair. It seems to be involved in an RecBC-independent recombinational process of DNA repair. It may act with RecF and RecO. The polypeptide is Recombination protein RecR (Porphyromonas gingivalis (strain ATCC 33277 / DSM 20709 / CIP 103683 / JCM 12257 / NCTC 11834 / 2561)).